Reading from the N-terminus, the 328-residue chain is Aspartate carbamoyltransferase catalytic subunit (328 aa).

Residues R70 and T71 each contribute to the carbamoyl phosphate site. An L-aspartate-binding site is contributed by K98. Residues R120, H150, and Q153 each contribute to the carbamoyl phosphate site. The L-aspartate site is built by R183 and R238. Carbamoyl phosphate-binding residues include G279 and P280.

Belongs to the aspartate/ornithine carbamoyltransferase superfamily. ATCase family. Heterododecamer (2C3:3R2) of six catalytic PyrB chains organized as two trimers (C3), and six regulatory PyrI chains organized as three dimers (R2).

The catalysed reaction is carbamoyl phosphate + L-aspartate = N-carbamoyl-L-aspartate + phosphate + H(+). It participates in pyrimidine metabolism; UMP biosynthesis via de novo pathway; (S)-dihydroorotate from bicarbonate: step 2/3. Catalyzes the condensation of carbamoyl phosphate and aspartate to form carbamoyl aspartate and inorganic phosphate, the committed step in the de novo pyrimidine nucleotide biosynthesis pathway. This chain is Aspartate carbamoyltransferase catalytic subunit, found in Methylococcus capsulatus (strain ATCC 33009 / NCIMB 11132 / Bath).